A 275-amino-acid chain; its full sequence is Nitrogenase iron protein 3 (275 aa).

9–16 (GKGGIGKS) serves as a coordination point for ATP. Cysteine 97 provides a ligand contact to [4Fe-4S] cluster. Position 100 is an ADP-ribosylarginine; by dinitrogenase reductase ADP-ribosyltransferase (arginine 100). Residue cysteine 132 participates in [4Fe-4S] cluster binding.

Belongs to the NifH/BchL/ChlL family. In terms of assembly, homodimer. [4Fe-4S] cluster serves as cofactor. The reversible ADP-ribosylation of Arg-100 inactivates the nitrogenase reductase and regulates nitrogenase activity.

It catalyses the reaction N2 + 8 reduced [2Fe-2S]-[ferredoxin] + 16 ATP + 16 H2O = H2 + 8 oxidized [2Fe-2S]-[ferredoxin] + 2 NH4(+) + 16 ADP + 16 phosphate + 6 H(+). In terms of biological role, the key enzymatic reactions in nitrogen fixation are catalyzed by the nitrogenase complex, which has 2 components: the iron protein (component 2) and a component 1 which is either a molybdenum-iron protein, a vanadium-iron, or an iron-iron protein. The polypeptide is Nitrogenase iron protein 3 (anfH) (Azotobacter vinelandii).